The following is a 474-amino-acid chain: Ribulose bisphosphate carboxylase large chain (474 aa).

Substrate-binding residues include N117 and T167. The active-site Proton acceptor is the K169. K171 serves as a coordination point for substrate. Mg(2+) is bound by residues K195, D197, and E198. K195 is modified (N6-carboxylysine). Catalysis depends on H288, which acts as the Proton acceptor. R289, H321, and S373 together coordinate substrate.

The protein belongs to the RuBisCO large chain family. Type I subfamily. As to quaternary structure, heterohexadecamer of 8 large chains and 8 small chains. The cofactor is Mg(2+).

It carries out the reaction 2 (2R)-3-phosphoglycerate + 2 H(+) = D-ribulose 1,5-bisphosphate + CO2 + H2O. The enzyme catalyses D-ribulose 1,5-bisphosphate + O2 = 2-phosphoglycolate + (2R)-3-phosphoglycerate + 2 H(+). RuBisCO catalyzes two reactions: the carboxylation of D-ribulose 1,5-bisphosphate, the primary event in carbon dioxide fixation, as well as the oxidative fragmentation of the pentose substrate. Both reactions occur simultaneously and in competition at the same active site. This Hydrogenophilus thermoluteolus (Pseudomonas hydrogenothermophila) protein is Ribulose bisphosphate carboxylase large chain.